A 305-amino-acid chain; its full sequence is UDP-N-acetylenolpyruvoylglucosamine reductase (305 aa).

The region spanning 37 to 202 (GIGGPARFLA…LSVTFNLEPK (166 aa)) is the FAD-binding PCMH-type domain. Residue arginine 183 is part of the active site.

It belongs to the MurB family. It depends on FAD as a cofactor.

It localises to the cytoplasm. The catalysed reaction is UDP-N-acetyl-alpha-D-muramate + NADP(+) = UDP-N-acetyl-3-O-(1-carboxyvinyl)-alpha-D-glucosamine + NADPH + H(+). Its pathway is cell wall biogenesis; peptidoglycan biosynthesis. Functionally, cell wall formation. The protein is UDP-N-acetylenolpyruvoylglucosamine reductase of Rhodopirellula baltica (strain DSM 10527 / NCIMB 13988 / SH1).